Here is a 305-residue protein sequence, read N- to C-terminus: Heme A synthase (305 aa).

Residues 1 to 6 (MKKFLK) are Cytoplasmic-facing. The helical transmembrane segment at 7–27 (VWSVLTIICMTVVVFGGALVT) threads the bilayer. At 28–63 (KTGSADGCGNSWPLCNGQLVRLTDVTPEKLIEFMHR) the chain is on the extracellular side. The cysteines at positions 35 and 42 are disulfide-linked. E59 is a catalytic residue. Residue H62 participates in heme o binding. The helical transmembrane segment at 64–84 (MTTGISSIFVIVLAICAWIYM) threads the bilayer. Residues 85 to 92 (KNRRETKP) lie on the Cytoplasmic side of the membrane. A helical membrane pass occupies residues 93–113 (LAIIAVLFLIIQALMGMAAVV). Residues 114-122 (WGQNPYIMA) are Extracellular-facing. Residues 123–143 (LHFGISIICYASIVLLALMIF) form a helical membrane-spanning segment. Residue H124 participates in heme o binding. The Cytoplasmic portion of the chain corresponds to 144 to 160 (EVDRKFDARNLVMGTKL). Residues 161–181 (RINIYALTIYTYLAVYTGALV) traverse the membrane as a helical segment. Residues 182–212 (RHEKASMAVPVWPFENGKFIMPDSVQDYVQY) lie on the Extracellular side of the membrane. A helical membrane pass occupies residues 213–233 (FHRVAAFILIVWLLYVTWLVF). H214 lines the heme b pocket. The Cytoplasmic portion of the chain corresponds to 234-240 (RDYRRYR). Residues 241-261 (VLTFSMVLSLLFIALQAVTGA) form a helical membrane-spanning segment. Residues 262–271 (LSVYTGVNLY) are Extracellular-facing. The chain crosses the membrane as a helical span at residues 272–292 (IALAHSLIITMLFALLCYLCL). A heme b-binding site is contributed by H276. The Cytoplasmic portion of the chain corresponds to 293 to 305 (LASRSKSNRLRIK).

It belongs to the COX15/CtaA family. Type 1 subfamily. Interacts with CtaB. Heme b serves as cofactor.

The protein localises to the cell membrane. It carries out the reaction Fe(II)-heme o + 2 A + H2O = Fe(II)-heme a + 2 AH2. The protein operates within porphyrin-containing compound metabolism; heme A biosynthesis; heme A from heme O: step 1/1. Functionally, catalyzes the conversion of heme O to heme A by two successive hydroxylations of the methyl group at C8. The first hydroxylation forms heme I, the second hydroxylation results in an unstable dihydroxymethyl group, which spontaneously dehydrates, resulting in the formyl group of heme A. The sequence is that of Heme A synthase from Listeria welshimeri serovar 6b (strain ATCC 35897 / DSM 20650 / CCUG 15529 / CIP 8149 / NCTC 11857 / SLCC 5334 / V8).